The primary structure comprises 251 residues: Electron transfer flavoprotein subunit beta, mitochondrial (251 aa).

This sequence belongs to the ETF beta-subunit/FixA family. In terms of assembly, heterodimer of an alpha and a beta subunit. FAD serves as cofactor. It depends on AMP as a cofactor.

It localises to the mitochondrion matrix. Functionally, the electron transfer flavoprotein serves as a specific electron acceptor for several dehydrogenases, including five acyl-CoA dehydrogenases, glutaryl-CoA and sarcosine dehydrogenase. It transfers the electrons to the main mitochondrial respiratory chain via ETF-ubiquinone oxidoreductase (ETF dehydrogenase). Involved in leucine catabolism and in phytol degradation. The chain is Electron transfer flavoprotein subunit beta, mitochondrial (ETFB) from Arabidopsis thaliana (Mouse-ear cress).